The chain runs to 29 residues: uncharacterized protein (29 aa).

It is found in the plastid. The protein resides in the chloroplast. This is an uncharacterized protein from Trieres chinensis (Marine centric diatom).